Reading from the N-terminus, the 110-residue chain is Insulin (110 aa).

A signal peptide spans 1 to 24 (MALWMRLLPLLVLLALWGPDPASA). Intrachain disulfides connect Cys31–Cys96, Cys43–Cys109, and Cys95–Cys100. The propeptide at 57 to 87 (EAEDLQVGQVELGGGPGAGSLQPLALEGSLQ) is c peptide.

It belongs to the insulin family. As to quaternary structure, heterodimer of a B chain and an A chain linked by two disulfide bonds.

Its subcellular location is the secreted. Its function is as follows. Insulin decreases blood glucose concentration. It increases cell permeability to monosaccharides, amino acids and fatty acids. It accelerates glycolysis, the pentose phosphate cycle, and glycogen synthesis in liver. The polypeptide is Insulin (INS) (Pan troglodytes (Chimpanzee)).